A 330-amino-acid polypeptide reads, in one-letter code: MLSLKLPRLFRIDQVPQVFHEQGILFGYRHPQSSATACILSLFQMTNETLNIWTHLLPFWFFVWRFMTALYVTDIQNDSYSWPMLVYMCTSCVYPLASSCAHTFSSMSKNARHICYFLDYGAVNLFSLGSAIAYSAYTFPDALVCSTFHECYVALAVLNTILSTGLSCYSRFLELQKPRLCKLLRVLAFAYPYTWDSLPIFYRLFLFPGESSRNEAMLYHQKHMGMTLLASFFYSAHLPERLAPGRFDYIGHSHQLFHVCVILATHLQMEAILLDKTLRREWLLATSRPFSFPQIAAAMLLCIIFSLSNIIYFSAALYRIPEPELHEKET.

Residues 1–51 (MLSLKLPRLFRIDQVPQVFHEQGILFGYRHPQSSATACILSLFQMTNETLN) are Cytoplasmic-facing. A helical transmembrane segment spans residues 52–72 (IWTHLLPFWFFVWRFMTALYV). At 73-81 (TDIQNDSYS) the chain is on the extracellular side. The helical transmembrane segment at 82 to 101 (WPMLVYMCTSCVYPLASSCA) threads the bilayer. Residues 102–113 (HTFSSMSKNARH) are Cytoplasmic-facing. Residues 114–134 (ICYFLDYGAVNLFSLGSAIAY) form a helical membrane-spanning segment. Residues 135–141 (SAYTFPD) are Extracellular-facing. Residues 142–162 (ALVCSTFHECYVALAVLNTIL) form a helical membrane-spanning segment. Residues 163-186 (STGLSCYSRFLELQKPRLCKLLRV) are Cytoplasmic-facing. Residues 187-207 (LAFAYPYTWDSLPIFYRLFLF) traverse the membrane as a helical segment. The Extracellular segment spans residues 208–253 (PGESSRNEAMLYHQKHMGMTLLASFFYSAHLPERLAPGRFDYIGHS). A helical membrane pass occupies residues 254 to 274 (HQLFHVCVILATHLQMEAILL). Over 275–294 (DKTLRREWLLATSRPFSFPQ) the chain is Cytoplasmic. The chain crosses the membrane as a helical span at residues 295 to 315 (IAAAMLLCIIFSLSNIIYFSA). The Extracellular portion of the chain corresponds to 316-330 (ALYRIPEPELHEKET).

Belongs to the ADIPOR family.

The protein resides in the cell membrane. Functionally, plasma membrane progesterone (P4) receptor coupled to G proteins. Seems to act through a G(i) mediated pathway. May be involved in oocyte maturation. In Mus musculus (Mouse), this protein is Membrane progestin receptor gamma.